We begin with the raw amino-acid sequence, 193 residues long: MARARQEGSSPEPVEGLARDGPRPFPLGRLVPSAVSCGLCEPGLAAAPAAPTLLPAAYLCAPTAPPAVTAALGGSRWPGGPRSRPRGPRPDGPQPSLSLAEQHLESPVPSAPGALAGGPTQAAPGVRGEEEQWAREIGAQLRRMADDLNAQYERRRQEEQQRHRPSPWRVLYNLIMGLLPLPRGHRAPEMEPN.

Disordered stretches follow at residues 1 to 28 and 71 to 138; these read MARARQEGSSPEPVEGLARDGPRPFPLG and ALGG…REIG. Position 10 is a phosphoserine (Ser10). Over residues 71-82 the composition is skewed to low complexity; sequence ALGGSRWPGGPR. Residues 137 to 151 carry the BH3 motif; it reads IGAQLRRMADDLNAQ.

This sequence belongs to the Bcl-2 family. Interacts with MCL1 and BCL2A1. Interacts (via BH3 domain) with BCL2. Interacts with BCL2L1/BCL-XL. Interacts (via BH3 domain) with NOL3/ARC (via CARD domain); this interaction prevents BBC3 association with BCL2 and results in CASP8 activation. Ubiquitously expressed.

Its subcellular location is the mitochondrion. In terms of biological role, essential mediator of p53/TP53-dependent and p53/TP53-independent apoptosis. Promotes partial unfolding of BCL2L1 and dissociation of BCL2L1 from p53/TP53, releasing the bound p53/TP53 to induce apoptosis. Regulates ER stress-induced neuronal apoptosis. This Homo sapiens (Human) protein is Bcl-2-binding component 3, isoforms 1/2 (BBC3).